The chain runs to 224 residues: Leucyl/phenylalanyl-tRNA--protein transferase (224 aa).

This sequence belongs to the L/F-transferase family.

The protein localises to the cytoplasm. It catalyses the reaction N-terminal L-lysyl-[protein] + L-leucyl-tRNA(Leu) = N-terminal L-leucyl-L-lysyl-[protein] + tRNA(Leu) + H(+). It carries out the reaction N-terminal L-arginyl-[protein] + L-leucyl-tRNA(Leu) = N-terminal L-leucyl-L-arginyl-[protein] + tRNA(Leu) + H(+). The catalysed reaction is L-phenylalanyl-tRNA(Phe) + an N-terminal L-alpha-aminoacyl-[protein] = an N-terminal L-phenylalanyl-L-alpha-aminoacyl-[protein] + tRNA(Phe). Functionally, functions in the N-end rule pathway of protein degradation where it conjugates Leu, Phe and, less efficiently, Met from aminoacyl-tRNAs to the N-termini of proteins containing an N-terminal arginine or lysine. The polypeptide is Leucyl/phenylalanyl-tRNA--protein transferase (Rhodopseudomonas palustris (strain HaA2)).